The primary structure comprises 173 residues: Mesencephalic astrocyte-derived neurotrophic factor homolog (173 aa).

A signal peptide spans 1-22; it reads MKTWYMVVVIGFLATLVQTSLA. 4 cysteine pairs are disulfide-bonded: Cys-28-Cys-114, Cys-31-Cys-103, Cys-61-Cys-72, and Cys-148-Cys-151.

This sequence belongs to the ARMET family.

It is found in the secreted. Functionally, required during the maturation of the embryonic nervous system for maintenance of neuronal and cuticular connectivity. Essential for maintenance of dopaminergic neurons and dopamine levels. The protein is Mesencephalic astrocyte-derived neurotrophic factor homolog of Drosophila yakuba (Fruit fly).